Here is a 325-residue protein sequence, read N- to C-terminus: Biotin synthase (325 aa).

The region spanning 36 to 254 is the Radical SAM core domain; that stretch reads NEVQLAMLLS…IALARIMFPK (219 aa). [4Fe-4S] cluster is bound by residues C51, C55, and C58. Residues C95, C126, C186, and R258 each coordinate [2Fe-2S] cluster.

Belongs to the radical SAM superfamily. Biotin synthase family. As to quaternary structure, homodimer. [4Fe-4S] cluster is required as a cofactor. The cofactor is [2Fe-2S] cluster.

It catalyses the reaction (4R,5S)-dethiobiotin + (sulfur carrier)-SH + 2 reduced [2Fe-2S]-[ferredoxin] + 2 S-adenosyl-L-methionine = (sulfur carrier)-H + biotin + 2 5'-deoxyadenosine + 2 L-methionine + 2 oxidized [2Fe-2S]-[ferredoxin]. Its pathway is cofactor biosynthesis; biotin biosynthesis; biotin from 7,8-diaminononanoate: step 2/2. Its function is as follows. Catalyzes the conversion of dethiobiotin (DTB) to biotin by the insertion of a sulfur atom into dethiobiotin via a radical-based mechanism. The protein is Biotin synthase of Neorickettsia sennetsu (strain ATCC VR-367 / Miyayama) (Ehrlichia sennetsu).